Consider the following 227-residue polypeptide: Enolase-phosphatase E1 (227 aa).

The protein belongs to the HAD-like hydrolase superfamily. MasA/MtnC family. Monomer. Requires Mg(2+) as cofactor.

It catalyses the reaction 5-methylsulfanyl-2,3-dioxopentyl phosphate + H2O = 1,2-dihydroxy-5-(methylsulfanyl)pent-1-en-3-one + phosphate. It functions in the pathway amino-acid biosynthesis; L-methionine biosynthesis via salvage pathway; L-methionine from S-methyl-5-thio-alpha-D-ribose 1-phosphate: step 3/6. It participates in amino-acid biosynthesis; L-methionine biosynthesis via salvage pathway; L-methionine from S-methyl-5-thio-alpha-D-ribose 1-phosphate: step 4/6. Its function is as follows. Bifunctional enzyme that catalyzes the enolization of 2,3-diketo-5-methylthiopentyl-1-phosphate (DK-MTP-1-P) into the intermediate 2-hydroxy-3-keto-5-methylthiopentenyl-1-phosphate (HK-MTPenyl-1-P), which is then dephosphorylated to form the acireductone 1,2-dihydroxy-3-keto-5-methylthiopentene (DHK-MTPene). The sequence is that of Enolase-phosphatase E1 from Azotobacter vinelandii (strain DJ / ATCC BAA-1303).